The chain runs to 270 residues: Methylthioribulose-1-phosphate dehydratase (270 aa).

Cys-122 contributes to the substrate binding site. Residues His-140 and His-142 each contribute to the Zn(2+) site. Glu-165 (proton donor/acceptor) is an active-site residue. His-230 is a Zn(2+) binding site.

The protein belongs to the aldolase class II family. MtnB subfamily. The cofactor is Zn(2+).

Its subcellular location is the cytoplasm. The enzyme catalyses 5-(methylsulfanyl)-D-ribulose 1-phosphate = 5-methylsulfanyl-2,3-dioxopentyl phosphate + H2O. Its pathway is amino-acid biosynthesis; L-methionine biosynthesis via salvage pathway; L-methionine from S-methyl-5-thio-alpha-D-ribose 1-phosphate: step 2/6. Its function is as follows. Catalyzes the dehydration of methylthioribulose-1-phosphate (MTRu-1-P) into 2,3-diketo-5-methylthiopentyl-1-phosphate (DK-MTP-1-P). The sequence is that of Methylthioribulose-1-phosphate dehydratase from Candida albicans (strain SC5314 / ATCC MYA-2876) (Yeast).